The sequence spans 94 residues: Pyrimidine/purine nucleoside phosphorylase (94 aa).

Belongs to the nucleoside phosphorylase PpnP family.

The catalysed reaction is a purine D-ribonucleoside + phosphate = a purine nucleobase + alpha-D-ribose 1-phosphate. It catalyses the reaction adenosine + phosphate = alpha-D-ribose 1-phosphate + adenine. It carries out the reaction cytidine + phosphate = cytosine + alpha-D-ribose 1-phosphate. The enzyme catalyses guanosine + phosphate = alpha-D-ribose 1-phosphate + guanine. The catalysed reaction is inosine + phosphate = alpha-D-ribose 1-phosphate + hypoxanthine. It catalyses the reaction thymidine + phosphate = 2-deoxy-alpha-D-ribose 1-phosphate + thymine. It carries out the reaction uridine + phosphate = alpha-D-ribose 1-phosphate + uracil. The enzyme catalyses xanthosine + phosphate = alpha-D-ribose 1-phosphate + xanthine. In terms of biological role, catalyzes the phosphorolysis of diverse nucleosides, yielding D-ribose 1-phosphate and the respective free bases. Can use uridine, adenosine, guanosine, cytidine, thymidine, inosine and xanthosine as substrates. Also catalyzes the reverse reactions. The polypeptide is Pyrimidine/purine nucleoside phosphorylase (Pseudomonas putida (strain W619)).